The chain runs to 85 residues: Small ribosomal subunit protein bS18 (85 aa).

It belongs to the bacterial ribosomal protein bS18 family. As to quaternary structure, part of the 30S ribosomal subunit. Forms a tight heterodimer with protein bS6.

Its function is as follows. Binds as a heterodimer with protein bS6 to the central domain of the 16S rRNA, where it helps stabilize the platform of the 30S subunit. The protein is Small ribosomal subunit protein bS18 of Helicobacter acinonychis (strain Sheeba).